A 183-amino-acid chain; its full sequence is ATP-dependent protease subunit HslV (183 aa).

Thr-2 is a catalytic residue. Residues Gly-157, Cys-160, and Thr-163 each contribute to the Na(+) site.

The protein belongs to the peptidase T1B family. HslV subfamily. In terms of assembly, a double ring-shaped homohexamer of HslV is capped on each side by a ring-shaped HslU homohexamer. The assembly of the HslU/HslV complex is dependent on binding of ATP.

Its subcellular location is the cytoplasm. It carries out the reaction ATP-dependent cleavage of peptide bonds with broad specificity.. With respect to regulation, allosterically activated by HslU binding. Functionally, protease subunit of a proteasome-like degradation complex believed to be a general protein degrading machinery. The sequence is that of ATP-dependent protease subunit HslV from Vibrio parahaemolyticus serotype O3:K6 (strain RIMD 2210633).